A 1784-amino-acid chain; its full sequence is Sodium channel protein type 4 subunit alpha B (1784 aa).

The Cytoplasmic portion of the chain corresponds to 1–130; it reads MARLLPPTGT…RAAIRILIHS (130 aa). The segment at 29 to 48 is disordered; that stretch reads AEEAAEQERMKEQNVKVAEE. One copy of the I repeat lies at 112 to 429; it reads CLSPFNPVRR…VVAMAYAEQN (318 aa). The chain crosses the membrane as a helical span at residues 131-149; sequence LFSLVIMLTILTNCVFMAM. The Extracellular segment spans residues 150–156; sequence SDPPGWS. Residues 157–177 traverse the membrane as a helical segment; it reads KILEYVFTGIYTFEAMVKVLS. Residues 178-191 lie on the Cytoplasmic side of the membrane; that stretch reads RGFCIGDFTFLRDP. Residues 192 to 209 traverse the membrane as a helical segment; the sequence is WNWLDFMVISMAYLTEFV. Residues 210–215 are Extracellular-facing; that stretch reads DLGNIS. Asparagine 213 carries an N-linked (GlcNAc...) asparagine glycan. A helical transmembrane segment spans residues 216-232; that stretch reads ALRTFRVLRALKTITVI. Over 233 to 251 the chain is Cytoplasmic; it reads PGLKTIVGALIQSVKKLAD. The chain crosses the membrane as a helical span at residues 252-271; the sequence is VMILTVFCLSVFALIGLQLF. The Extracellular portion of the chain corresponds to 272–366; the sequence is MGNLRQKCVL…PNYGYTSYDN (95 aa). Cysteine 279 and cysteine 335 are disulfide-bonded. N-linked (GlcNAc...) asparagine glycosylation is found at asparagine 291, asparagine 304, and asparagine 337. Cysteine 344 and cysteine 350 are oxidised to a cystine. Residues 367 to 391 constitute an intramembrane region (pore-forming); that stretch reads FGWAFLALFRLMTQDFWENLFQLTL. Topologically, residues 392-398 are extracellular; sequence RAAGKTY. The chain crosses the membrane as a helical span at residues 399–419; sequence MIFFVVIIFLGSFYLINLILA. Over 420 to 568 the chain is Cytoplasmic; that stretch reads VVAMAYAEQN…RIVYLFVMDP (149 aa). The segment at 455 to 478 is disordered; the sequence is EQKNGMVNGSKTSLSSKKKGDNDQ. One copy of the II repeat lies at 550–821; sequence CCIPWVKFKR…QIAISRITRG (272 aa). The chain crosses the membrane as a helical span at residues 569–587; the sequence is FVDLGITLCIVLNTVFMAM. The Extracellular portion of the chain corresponds to 588-598; it reads EHYPMSVHVEE. Residues 599-618 traverse the membrane as a helical segment; that stretch reads VLAIGNLVFTGIFAAEMVLK. Over 619–632 the chain is Cytoplasmic; the sequence is LIALDPYYYFQVGW. A helical membrane pass occupies residues 633-652; it reads NIFDSIIVTMSLVELMLADV. Topologically, residues 653–654 are extracellular; it reads EG. A helical membrane pass occupies residues 655–672; that stretch reads LSVLRSFRLMRVFKLAKS. Over 673 to 688 the chain is Cytoplasmic; it reads WPTLNMLIKIIGNSVG. The chain crosses the membrane as a helical span at residues 689 to 707; the sequence is ALGNLTLVLAIIVFIFAVV. At 708–736 the chain is on the extracellular side; sequence GMQLFGKSYTDSVCKISSDCELPRWHMAD. Cysteine 721 and cysteine 727 are joined by a disulfide. The segment at residues 737–757 is an intramembrane region (pore-forming); it reads FFHAFLIIFRVLCGEWIETMW. The Extracellular segment spans residues 758 to 768; it reads DCMEVAGQGMC. Cysteine 759 and cysteine 768 are joined by a disulfide. The helical transmembrane segment at 769–787 threads the bilayer; sequence IIVFMMVMVIGNLVVLNLF. At 788-973 the chain is on the cytoplasmic side; that stretch reads LALLLSSFSG…TCFAIVEHSY (186 aa). The tract at residues 870 to 928 is disordered; it reads PIANGESDDDDGNGSSEDEDDEGRDINMKKKNGDESSTCSTVDKPPEVEDLVEEEEEDL. Residues 875–892 show a composition bias toward acidic residues; the sequence is ESDDDDGNGSSEDEDDEG. A compositionally biased stretch (basic and acidic residues) spans 893–903; that stretch reads RDINMKKKNGD. The segment covering 917–928 has biased composition (acidic residues); it reads VEDLVEEEEEDL. The stretch at 954–1269 is one III repeat; the sequence is KGKAWWNFRK…KKYYNAMKKL (316 aa). The helical transmembrane segment at 974-991 threads the bilayer; the sequence is FETFIIFMILLSSGALAF. At 992 to 1004 the chain is on the extracellular side; that stretch reads EDIYIEQRRMIKI. A helical membrane pass occupies residues 1005 to 1023; it reads ILEYADQVFTYVFVVEMLL. The Cytoplasmic portion of the chain corresponds to 1024–1037; that stretch reads KWVAYGFKVYFTNA. The helical transmembrane segment at 1038 to 1056 threads the bilayer; it reads WCWLDFLIVDVSLISLTAN. The Extracellular portion of the chain corresponds to 1057 to 1064; that stretch reads ILGYSELG. Residues 1065–1083 traverse the membrane as a helical segment; sequence AIKSLRTLRALRPLRALSR. Residues 1084 to 1101 lie on the Cytoplasmic side of the membrane; the sequence is FEGMRVVVVNALVGAIPS. The chain crosses the membrane as a helical span at residues 1102–1121; it reads IFNVLLVCLIFWLIFSIMGV. At 1122 to 1173 the chain is on the extracellular side; the sequence is NLFAGKFYYCFNETSEEVFDHNVVNNKTDCYELMEFHPEVRWMNGKINFDNV. Residues cysteine 1131 and cysteine 1151 are joined by a disulfide bond. 2 N-linked (GlcNAc...) asparagine glycosylation sites follow: asparagine 1133 and asparagine 1147. Positions 1174-1195 form an intramembrane region, pore-forming; the sequence is GMGYLALLQVATFKGWMDIMYS. Residues 1196–1212 are Extracellular-facing; sequence AVDSRAIESQPVYEANL. Residues 1213 to 1234 form a helical membrane-spanning segment; sequence YMYIYFVIFIIFGSFFTLNLFI. Residues 1235-1297 lie on the Cytoplasmic side of the membrane; the sequence is GVIIDNFNQQ…LVFDFVTQQF (63 aa). The interval 1253–1255 is important for rapid channel inactivation; it reads IFM. An IV repeat occupies 1278–1575; it reads IPRPTNCCQG…WEKFDPTASQ (298 aa). A helical membrane pass occupies residues 1298 to 1315; that stretch reads FDIFIMVMICLNMVTMMV. Topologically, residues 1316-1326 are extracellular; it reads ETDDQSAEIEE. The helical transmembrane segment at 1327–1345 threads the bilayer; sequence ILFYINFAFIILFTGECVL. The Cytoplasmic portion of the chain corresponds to 1346–1357; it reads KITALRYHYFSI. A helical membrane pass occupies residues 1358–1375; that stretch reads GWNIFDFVVVILSILGIG. The Extracellular portion of the chain corresponds to 1376 to 1388; the sequence is LADLIEKYFVSPT. A helical membrane pass occupies residues 1389–1405; sequence LFRVIRLARIGRVLRLI. The Cytoplasmic portion of the chain corresponds to 1406–1424; the sequence is RGAKGIRTLLFALMMSLPA. The chain crosses the membrane as a helical span at residues 1425–1442; sequence LFNIGLLLFLIMFIFSIF. Topologically, residues 1443-1464 are extracellular; it reads GMSNFAYVKKEVGIDDMMNFET. Positions 1465-1487 form an intramembrane region, pore-forming; that stretch reads FGNSIICMFMITTSAGWDGLLAP. The Extracellular segment spans residues 1488 to 1516; it reads ILNSPPDCDPDVDNPGSTTRGNCGNAAVG. Cysteines 1495 and 1510 form a disulfide. A helical transmembrane segment spans residues 1517–1539; sequence IVFFCSYIVMSFLVVVNMYIAII. The Cytoplasmic segment spans residues 1540-1784; sequence LENFNVATEE…AADNLRESIV (245 aa). Residues 1669 to 1698 form the IQ domain; the sequence is EEVAASTIQRAYRSHILKRCVKQASYMYRD.

Belongs to the sodium channel (TC 1.A.1.10) family. Nav1.4/SCN4A subfamily. As to quaternary structure, voltage-gated sodium (Nav) channels consist of an ion-conducting alpha subunit which is functional on its own associated with regulatory beta subunits. Lacks the cysteine which covalently binds the conotoxin GVIIJ. This cysteine (position 719) is speculated in other sodium channel subunits alpha to be implied in covalent binding with the sodium channel subunit beta-2 or beta-4. As to expression, expressed in skeletal muscle, heart, brain, spinal cord, and eye.

It is found in the cell membrane. The enzyme catalyses Na(+)(in) = Na(+)(out). Its function is as follows. Pore-forming subunit of a voltage-gated sodium (Nav) channel that directly mediates the depolarizing phase of action potentials in excitable membranes. Navs, also called VGSCs (voltage-gated sodium channels) or VDSCs (voltage-dependent sodium channels), operate by switching between closed and open conformations depending on the voltage difference across the membrane. In the open conformation they allow Na(+) ions to selectively pass through the pore, along their electrochemical gradient. The influx of Na+ ions provokes membrane depolarization, initiating the propagation of electrical signals throughout cells and tissues. This is Sodium channel protein type 4 subunit alpha B (scn4ab) from Danio rerio (Zebrafish).